Reading from the N-terminus, the 589-residue chain is Transcription factor 4 (589 aa).

Disordered regions lie at residues 1–124 (MTSR…SSSK), 138–163 (DGHH…MLGN), 184–239 (PSHS…SQTG), 254–297 (HTNN…EGPL), 384–492 (SLLP…MANN), and 556–589 (KRRE…MGQM). Phosphoserine is present on residues Ser8 and Ser13. Positions 56–74 (GTLSPTKPGSQYYPYSSNN) are enriched in polar residues. Positions 136-157 (MQDGHHSSDPWSSSSGMNQPGY) are leucine-zipper. The segment covering 184–224 (PSHSSADINSSLPPMSTFHRSGTNHYSTSSCTPPANGTDSI) has biased composition (polar residues). Over residues 255–266 (TNNSFSSNPSTP) the composition is skewed to low complexity. Polar residues predominate over residues 283-292 (NGGQASSSPN). Ser290 bears the Phosphoserine mark. A class A specific domain region spans residues 380–403 (RGSHSLLPNQVPVPQLPVQSATSP). 2 stretches are compositionally biased toward low complexity: residues 385–398 (LLPN…LPVQ) and 421–430 (GQSVSSGSSE). A Phosphoserine modification is found at Ser433. Composition is skewed to basic and acidic residues over residues 445–461 (KSSE…DIKS) and 477–492 (PEQK…MANN). Positions 486 to 539 (ERRMANNARERLRVRDINEAFKELGRMVQLHLKSDKPQTKLLILHQAVAVILSL) constitute a bHLH domain.

In terms of assembly, efficient DNA binding requires dimerization with another bHLH protein. Forms homo- or heterooligomers with myogenin. Interacts with HIVEP2. Interacts with NEUROD2. Interacts with AGBL1.

It is found in the nucleus. Its function is as follows. Transcription factor that binds to the immunoglobulin enhancer Mu-E5/KE5-motif. Involved in the initiation of neuronal differentiation. Activates transcription by binding to the E box (5'-CANNTG-3'). Binds to the E-box present in the somatostatin receptor 2 initiator element (SSTR2-INR) to activate transcription. Interacts with the CCAAT displacement protein (CDP2) to bind the tyrosine hydroxylase enhancer. This Rattus norvegicus (Rat) protein is Transcription factor 4 (Tcf4).